The primary structure comprises 206 residues: MQVELLNDQGLASSKVDVPDTVFGREYNESLIHQVVVAFQANARQGTRAQKDREQVRHSTKKPFKQKGTGRARAGMTSSPLWRGGGRIFPNMPDENFTQKINKKMYRAGMASIFSQLAREGRLAVVDSLAVDSPKTKVLADKFKAMNLNSVLVIADVVDENLYLASRNLVNILVVEPRYADPVSLVHYKKVLVTKAAMDQLKEMFA.

The tract at residues 46–77 (GTRAQKDREQVRHSTKKPFKQKGTGRARAGMT) is disordered. Residues 58-70 (HSTKKPFKQKGTG) show a composition bias toward basic residues.

The protein belongs to the universal ribosomal protein uL4 family. In terms of assembly, part of the 50S ribosomal subunit.

In terms of biological role, one of the primary rRNA binding proteins, this protein initially binds near the 5'-end of the 23S rRNA. It is important during the early stages of 50S assembly. It makes multiple contacts with different domains of the 23S rRNA in the assembled 50S subunit and ribosome. Its function is as follows. Forms part of the polypeptide exit tunnel. This chain is Large ribosomal subunit protein uL4, found in Polaromonas sp. (strain JS666 / ATCC BAA-500).